The sequence spans 235 residues: Endonuclease V (235 aa).

Asp-45 and Asp-115 together coordinate Mg(2+).

It belongs to the endonuclease V family. It depends on Mg(2+) as a cofactor.

It localises to the cytoplasm. It catalyses the reaction Endonucleolytic cleavage at apurinic or apyrimidinic sites to products with a 5'-phosphate.. In terms of biological role, DNA repair enzyme involved in the repair of deaminated bases. Selectively cleaves double-stranded DNA at the second phosphodiester bond 3' to a deoxyinosine leaving behind the intact lesion on the nicked DNA. The sequence is that of Endonuclease V from Bacillus thuringiensis subsp. konkukian (strain 97-27).